The chain runs to 314 residues: 3'-5' exoribonuclease YhaM (314 aa).

One can recognise an HD domain in the interval 163-279; that stretch reads HVVSMLHLAK…LHYIDNLDAK (117 aa).

The protein belongs to the YhaM family.

Shows a 3'-5' exoribonuclease activity. This Bacillus pumilus (strain SAFR-032) protein is 3'-5' exoribonuclease YhaM.